The primary structure comprises 316 residues: tRNA-cytidine(32) 2-sulfurtransferase (316 aa).

A PP-loop motif motif is present at residues serine 52–serine 57. [4Fe-4S] cluster is bound by residues cysteine 127, cysteine 130, and cysteine 218.

This sequence belongs to the TtcA family. In terms of assembly, homodimer. The cofactor is Mg(2+). Requires [4Fe-4S] cluster as cofactor.

It localises to the cytoplasm. It carries out the reaction cytidine(32) in tRNA + S-sulfanyl-L-cysteinyl-[cysteine desulfurase] + AH2 + ATP = 2-thiocytidine(32) in tRNA + L-cysteinyl-[cysteine desulfurase] + A + AMP + diphosphate + H(+). Its pathway is tRNA modification. Its function is as follows. Catalyzes the ATP-dependent 2-thiolation of cytidine in position 32 of tRNA, to form 2-thiocytidine (s(2)C32). The sulfur atoms are provided by the cysteine/cysteine desulfurase (IscS) system. The polypeptide is tRNA-cytidine(32) 2-sulfurtransferase (Haemophilus ducreyi (strain 35000HP / ATCC 700724)).